Consider the following 308-residue polypeptide: MIGAGPVGLFAAYFAHLHGLKTVILESLNEPGGQPEMLYPFKKILDIPVFNEITAADLTKRLLANLTDQDLVTGHKVSQLEKTDEFVIDGEYQVRSIIVATGNGAFKAKKFPLKATPEAEDHIHYFFKNPDLFAGQKIGIFGGGDTALDWAQELSQIADVTLVHRRDQFRGMESSVENLKADQKVTLKTPYLPKSMQVEKGQLEISLKMVGGDEVTQETFDQILVAYGFRADNRFVSKWGVDLDQGLIAVDRSMQTSVPGIYAIGDSCGYPGRVPVIGIGFGEAQIAVNAIMQDLFPEKSLTIHSTSI.

FAD is bound by residues Glu-26, Gln-34, Tyr-39, Val-77, Phe-106, Asp-266, and Thr-306.

It belongs to the ferredoxin--NADP reductase type 2 family. In terms of assembly, homodimer. FAD serves as cofactor.

It carries out the reaction 2 reduced [2Fe-2S]-[ferredoxin] + NADP(+) + H(+) = 2 oxidized [2Fe-2S]-[ferredoxin] + NADPH. The protein is Ferredoxin--NADP reductase of Lactobacillus delbrueckii subsp. bulgaricus (strain ATCC 11842 / DSM 20081 / BCRC 10696 / JCM 1002 / NBRC 13953 / NCIMB 11778 / NCTC 12712 / WDCM 00102 / Lb 14).